The following is a 61-amino-acid chain: Large ribosomal subunit protein uL30 (61 aa).

It belongs to the universal ribosomal protein uL30 family. In terms of assembly, part of the 50S ribosomal subunit.

This chain is Large ribosomal subunit protein uL30, found in Dichelobacter nodosus (strain VCS1703A).